An 83-amino-acid chain; its full sequence is MKLVLAIVLILMLVSLSTGAEESGQEISMVGPPLYIWDPIPPCKQLDEDCGYGYSCCEDLSCQPLIEPDTMEITALVCQIESA.

An N-terminal signal peptide occupies residues 1–19 (MKLVLAIVLILMLVSLSTG). Positions 20–42 (AEESGQEISMVGPPLYIWDPIPP) are excised as a propeptide. Intrachain disulfides connect C43–C57, C50–C62, and C56–C78.

The protein belongs to the conotoxin I3 superfamily. As to expression, expressed by the venom duct.

The protein localises to the secreted. This is Conotoxin Pu6.1 from Conus pulicarius (Flea-bitten cone).